We begin with the raw amino-acid sequence, 102 residues long: Small ribosomal subunit protein uS10 (102 aa).

It belongs to the universal ribosomal protein uS10 family. In terms of assembly, part of the 30S ribosomal subunit.

Its function is as follows. Involved in the binding of tRNA to the ribosomes. This chain is Small ribosomal subunit protein uS10, found in Parafrankia sp. (strain EAN1pec).